The sequence spans 174 residues: F-box protein At1g70360 (174 aa).

Positions 136 to 174 constitute an F-box domain; the sequence is PPCFISLPRELKHKILESLPGVDIGTLACVSSELRDMAS.

The protein is F-box protein At1g70360 of Arabidopsis thaliana (Mouse-ear cress).